The primary structure comprises 370 residues: Translocating chain-associated membrane protein 2 (370 aa).

Residues 1–22 (MAFRRRTKSYPLFSQEFIIHNH) are Cytoplasmic-facing. Residues 23-43 (ADIGFCLVLCVLIGLMFEVTA) traverse the membrane as a helical segment. Over 44-75 (KTAFLFILPQYNISVPTADSETVHYHYGPKDL) the chain is Extracellular. Asn55 is a glycosylation site (N-linked (GlcNAc...) asparagine). A helical transmembrane segment spans residues 76–96 (VTILFYVVITIIFHAVVQEYI). The Cytoplasmic segment spans residues 97-119 (LDKISKRLHLSKVKHSKFNESGQ). Residues 112–321 (SKFNESGQLL…HSQLRHWREY (210 aa)) enclose the TLC domain. Residues 120-140 (LLVFHLSAVAWCFYVIVTEGY) traverse the membrane as a helical segment. Over 141-159 (LTNPRSLWEDYPHVYLSFQ) the chain is Extracellular. A helical membrane pass occupies residues 160–180 (VKFFYLGQLAYWLHSLPELYF). Topologically, residues 181 to 191 (QKVRKEEVPRQ) are cytoplasmic. Residues 192 to 209 (LQYICLYLLHITGAYLLN) form a helical membrane-spanning segment. Over 210 to 214 (LSRLG) the chain is Extracellular. Residues 215–235 (LILLLLQYSTEALFHMARLFH) form a helical membrane-spanning segment. The Cytoplasmic portion of the chain corresponds to 236–250 (FADENNERLFNAWAA). A helical membrane pass occupies residues 251–271 (VFGVTRLFILTLAVLTIGFGL). At 272–287 (ARVENQVFDPEKGNFN) the chain is on the extracellular side. A helical transmembrane segment spans residues 288–308 (TLPCRLGMLLLVCVAQAWLMW). The Cytoplasmic segment spans residues 309–370 (RFIHSQLRHW…SSRTKKLKSP (62 aa)). The disordered stretch occupies residues 332–370 (SAVPRPPAKLLKREPGYHENGVVKAENGTSSRTKKLKSP).

This sequence belongs to the TRAM family. In terms of assembly, interacts with COL1A1. Interacts with SERCA2B.

The protein localises to the membrane. Functionally, necessary for collagen type I synthesis. May couple the activity of the ER Ca(2+) pump SERCA2B with the activity of the translocon. This coupling may increase the local Ca(2+) concentration at the site of collagen synthesis, and a high Ca(2+) concentration may be necessary for the function of molecular chaperones involved in collagen folding. Required for proper insertion of the first transmembrane helix N-terminus of TM4SF20 into the ER lumen, may act as a ceramide sensor for regulated alternative translocation (RAT). This is Translocating chain-associated membrane protein 2 (Tram2) from Mus musculus (Mouse).